The following is a 639-amino-acid chain: Chaperone protein DnaK (639 aa).

Position 198 is a phosphothreonine; by autocatalysis (Thr-198). Residues 604–639 (KSQAQGGDNADAGKQANAAADDVVDAEFEEVKDDKK) are disordered. Over residues 606-624 (QAQGGDNADAGKQANAAAD) the composition is skewed to low complexity. Residues 625–639 (DVVDAEFEEVKDDKK) show a composition bias toward acidic residues.

It belongs to the heat shock protein 70 family.

In terms of biological role, acts as a chaperone. This Shewanella baltica (strain OS223) protein is Chaperone protein DnaK.